A 519-amino-acid polypeptide reads, in one-letter code: Protein nucleotidyltransferase YdiU (519 aa).

Positions 101, 103, 104, 124, 136, 137, 194, and 201 each coordinate ATP. D271 (proton acceptor) is an active-site residue. The Mg(2+) site is built by N272 and D281. Residue D281 coordinates ATP.

The protein belongs to the SELO family. It depends on Mg(2+) as a cofactor. Requires Mn(2+) as cofactor.

It carries out the reaction L-seryl-[protein] + ATP = 3-O-(5'-adenylyl)-L-seryl-[protein] + diphosphate. It catalyses the reaction L-threonyl-[protein] + ATP = 3-O-(5'-adenylyl)-L-threonyl-[protein] + diphosphate. The enzyme catalyses L-tyrosyl-[protein] + ATP = O-(5'-adenylyl)-L-tyrosyl-[protein] + diphosphate. The catalysed reaction is L-histidyl-[protein] + UTP = N(tele)-(5'-uridylyl)-L-histidyl-[protein] + diphosphate. It carries out the reaction L-seryl-[protein] + UTP = O-(5'-uridylyl)-L-seryl-[protein] + diphosphate. It catalyses the reaction L-tyrosyl-[protein] + UTP = O-(5'-uridylyl)-L-tyrosyl-[protein] + diphosphate. Nucleotidyltransferase involved in the post-translational modification of proteins. It can catalyze the addition of adenosine monophosphate (AMP) or uridine monophosphate (UMP) to a protein, resulting in modifications known as AMPylation and UMPylation. This is Protein nucleotidyltransferase YdiU from Azoarcus sp. (strain BH72).